The primary structure comprises 503 residues: WD repeat-containing protein 55 homolog (503 aa).

Positions 1 to 131 (MHTHNNFKTP…DSAAFDLDDL (131 aa)) are disordered. Acidic residues-rich tracts occupy residues 12–23 (DADELDDLDDDM) and 37–56 (VGED…DMEA). The span at 59-76 (PNQNADENESISSDSSFD) shows a compositional bias: polar residues. A compositionally biased stretch (acidic residues) spans 78–96 (NAEDSSDSDDSMLEEDEAE). 6 WD repeats span residues 157–196 (KLED…NKLL), 201–242 (VHSK…KLYE), 244–282 (AHDD…PIFE), 285–324 (EVED…LYVQ), 327–366 (PYEE…YHCD), and 411–450 (QHNM…DFGD). The tract at residues 483-503 (TKEDEDNADNNDAAAGPSNSA) is disordered.

This sequence belongs to the WD repeat WDR55 family.

The sequence is that of WD repeat-containing protein 55 homolog from Drosophila pseudoobscura pseudoobscura (Fruit fly).